Reading from the N-terminus, the 526-residue chain is Peptide chain release factor 3 (526 aa).

The region spanning 9–277 is the tr-type G domain; sequence DKRRTFAIIS…GIVEWAPKPL (269 aa). GTP contacts are provided by residues 18-25, 86-90, and 140-143; these read SHPDAGKT, DTPGH, and NKLD.

This sequence belongs to the TRAFAC class translation factor GTPase superfamily. Classic translation factor GTPase family. PrfC subfamily.

The protein localises to the cytoplasm. Functionally, increases the formation of ribosomal termination complexes and stimulates activities of RF-1 and RF-2. It binds guanine nucleotides and has strong preference for UGA stop codons. It may interact directly with the ribosome. The stimulation of RF-1 and RF-2 is significantly reduced by GTP and GDP, but not by GMP. This Shewanella baltica (strain OS155 / ATCC BAA-1091) protein is Peptide chain release factor 3.